We begin with the raw amino-acid sequence, 128 residues long: Sirohydrochlorin cobaltochelatase (128 aa).

The Proton acceptor role is filled by histidine 9. Histidine 9 lines the Co(2+) pocket. Residues lysine 43 and 68–73 (FATGTH) each bind substrate. Histidine 73 contacts Co(2+).

This sequence belongs to the CbiX family. CbiXS subfamily. As to quaternary structure, homotetramer; dimer of dimers.

It carries out the reaction Co-sirohydrochlorin + 2 H(+) = sirohydrochlorin + Co(2+). The protein operates within cofactor biosynthesis; adenosylcobalamin biosynthesis; cob(II)yrinate a,c-diamide from sirohydrochlorin (anaerobic route): step 1/10. Functionally, catalyzes the insertion of Co(2+) into sirohydrochlorin as part of the anaerobic pathway to cobalamin biosynthesis. This chain is Sirohydrochlorin cobaltochelatase, found in Saccharolobus solfataricus (strain ATCC 35092 / DSM 1617 / JCM 11322 / P2) (Sulfolobus solfataricus).